The primary structure comprises 323 residues: uncharacterized protein (323 aa).

The TIR domain maps to 1–142; sequence MPSVFFSYSH…QVAKAVREAA (142 aa).

This is an uncharacterized protein from Sinorhizobium fredii (strain NBRC 101917 / NGR234).